We begin with the raw amino-acid sequence, 404 residues long: Endophilin-B2 (404 aa).

At M1 the chain carries N-acetylmethionine. A membrane-binding amphipathic helix region spans residues 1–27; the sequence is MDFNMKKLASDAGIFFTRAVQFTEEKF. Phosphoserine is present on S10. One can recognise a BAR domain in the interval 24 to 291; it reads EEKFGQAEKT…LGSSQGAIFP (268 aa). Positions 209–239 form a coiled coil; it reads SASALWNDEVDKAEQELRAAQTEFDRQAEVT. An SH3 domain is found at 344 to 404; sequence SGTRKARVLY…VPVTYLELLS (61 aa). At S404 the chain carries Phosphoserine.

This sequence belongs to the endophilin family. As to quaternary structure, homodimer, and heterodimer with SH3GLB1.

The protein resides in the cytoplasm. The protein is Endophilin-B2 of Rattus norvegicus (Rat).